Here is a 310-residue protein sequence, read N- to C-terminus: Cytochrome f (310 aa).

Residues 1–27 (MRRHLSLFLGSLVIGLALLIAPAASWA) form the signal peptide. The heme site is built by Y28, C48, C51, and H52. The helical transmembrane segment at 277–297 (IYGLLAFFAAVALAQIMLVLK) threads the bilayer.

The protein belongs to the cytochrome f family. The 4 large subunits of the cytochrome b6-f complex are cytochrome b6, subunit IV (17 kDa polypeptide, PetD), cytochrome f and the Rieske protein, while the 4 small subunits are PetG, PetL, PetM and PetN. The complex functions as a dimer. The cofactor is heme.

It is found in the cellular thylakoid membrane. Its function is as follows. Component of the cytochrome b6-f complex, which mediates electron transfer between photosystem II (PSII) and photosystem I (PSI), cyclic electron flow around PSI, and state transitions. In Synechococcus sp. (strain CC9605), this protein is Cytochrome f.